The chain runs to 79 residues: Eumenine mastoparan-OD (79 aa).

The signal sequence occupies residues 1 to 24 (MKQTIVIVLLAAVAMMACLQMVAA). AXPX repeat units lie at residues 24 to 27 (AEPL), 30 to 33 (AAPA), 44 to 47 (ASPI), 52 to 55 (ANPE), and 58 to 61 (ASPE). The propeptide occupies 25–62 (EPLPEAAPAPSPLAEAEALASPIAEALANPEALASPEA). Leu76 carries the leucine amide modification.

As to expression, expressed by the venom gland.

The protein resides in the secreted. It localises to the target cell membrane. Its function is as follows. Antimicrobial peptide with strong activity against the fungi C.albicans (MIC=6 uM) and B.cinerea (MIC=10 uM), and weaker activity against the Gram-negative bacterium E.coli (MIC=97 uM) and Gram-positive bacterium S.aureus (MIC=97 uM). Shows cytolytic activity against insect cell lines. Has potent hemolytic activity against ovine erythrocytes (80% at 50 uM), but has no hemolytic activity against human erythrocytes. In vivo, peptide injection in the vicinity of the head and thorax of lepidopteran larvae induces feeding disorder that lasts one or two days before recovering. The sequence is that of Eumenine mastoparan-OD from Orancistrocerus drewseni (Solitary wasp).